We begin with the raw amino-acid sequence, 375 residues long: Alpha-2,8-sialyltransferase 8B (375 aa).

The Cytoplasmic segment spans residues 1–6 (MQLQFR). Residues 7–23 (SWMLAALTLLVVFLIFA) form a helical; Signal-anchor for type II membrane protein membrane-spanning segment. Residues 24 to 375 (DISEIEEEIG…LTVGQCDGAT (352 aa)) are Lumenal-facing. N-linked (GlcNAc...) asparagine glycosylation is found at Asn-60, Asn-72, Asn-89, and Asn-134. Cystine bridges form between Cys-157–Cys-307 and Cys-171–Cys-371. CMP-N-acetyl-beta-neuraminate contacts are provided by Asn-162 and Asn-185. N-linked (GlcNAc...) asparagine glycosylation is found at Asn-219 and Asn-234. Residues Thr-294, Thr-295, Gly-296, Trp-316, Tyr-329, and His-330 each contribute to the CMP-N-acetyl-beta-neuraminate site. His-346 functions as the Proton donor/acceptor in the catalytic mechanism.

It belongs to the glycosyltransferase 29 family. Autopolysialylated. Autopolysialylation is not a prerequisite for the polysialylation acitity, but enhances the polysialylation acitity. As to expression, expressed only in newborn brain.

The protein resides in the golgi apparatus membrane. It localises to the secreted. The protein localises to the cell membrane. The catalysed reaction is [N-acetyl-alpha-D-neuraminosyl-(2-&gt;8)](n) + CMP-N-acetyl-beta-neuraminate = [N-acetyl-alpha-D-neuraminosyl-(2-&gt;8)](n+1) + CMP + H(+). It participates in protein modification; protein glycosylation. Catalyzes the transfer of a sialic acid from a CMP-linked sialic acid donor onto a terminal alpha-2,3-, alpha-2,6-, or alpha-2,8-linked sialic acid of an N-linked glycan acceptor through alpha-2,8-linkages. Therefore, participates in polysialic acid synthesis on various sialylated N-acetyllactosaminyl oligosaccharides (alpha-2,3-, alpha-2,6-, or alpha-2,8-linked sialic acid), including NCAM1, NCAM1 N-glycans, FETUB N-glycans, and to a lesser extent sialylparagloboside (SPG) and AHSG, which does not require the initial addition of an alpha 2,8-sialic acid. However, does not exhibit sialic acid-polymerase activity. Catalyzes polysialic acid synthesis in the hippocampal on NCAM1 and supports neurite outgrowth. ST8SIA2-mediated polysialylation influences on oligodendrocyte differentiation and may promote the integrity of myelin and axons. The sequence is that of Alpha-2,8-sialyltransferase 8B from Rattus norvegicus (Rat).